The chain runs to 455 residues: Histone chaperone RTT106 (455 aa).

The residue at position 2 (Ser-2) is an N-acetylserine. Residues 2 to 67 form a dimeric region region; it reads SKLFLDELPE…SSDLLKTDEI (66 aa). PH domains follow at residues 68–200 and 217–301; these read SETN…GFKI and INSF…VKRK. Residues 68-301 are double PH domain; the sequence is SETNTIFKLE…AKIDDYVKRK (234 aa). Over residues 305 to 314 the composition is skewed to basic and acidic residues; that stretch reads DKSMSEELKA. A disordered region spans residues 305–455; sequence DKSMSEELKA…DEDGSGVEYD (151 aa). Residues 319 to 339 show a composition bias toward polar residues; sequence KGQATDGTADQPSILQEATRQ. Composition is skewed to acidic residues over residues 350–366 and 376–395; these read SDDD…ESDL and DGAE…DEEE. Over residues 402–418 the composition is skewed to polar residues; it reads ALNRDNSFASINGQPEQ. A phosphoserine mark is found at Ser-408 and Ser-411. The segment covering 420–429 has biased composition (basic and acidic residues); sequence LQYKEFKEPL. The span at 430 to 455 shows a compositional bias: acidic residues; the sequence is ELEDIPIEIDNDDDEDDEDGSGVEYD. Ser-450 bears the Phosphoserine mark.

Belongs to the RTT106 family. In terms of assembly, homodimers (via the N-terminal domain). Interacts with the SWI/SNF complex. Interacts with the RSC complex. Interacts with the HIR complex. Interacts with the CAF-1 complex. Interacts with RLF2. Interacts with SIR4. Interacts with YTA7. Interacts with CAC2. Interacts with HPC2. Interacts with HIR2. Interacts with MSI1. Interacts with HIR1. Interacts with histone H3. Interacts with histone H4.

Its subcellular location is the nucleus. The protein resides in the chromosome. Its function is as follows. Histones H3 and H4 chaperone involved in the nucleosome formation and heterochromatin silencing. Required for the deposition of H3K56ac-carrying H3-H4 complex onto newly-replicated DNA. Plays a role in the transcriptional regulation of the cell-cycle dependent histone genes by directly recruiting the SWI/SNF and RSC chromatin remodeling complexes to the histone genes in a cell cycle dependent manner. In cooperation with HIR and ASF1, creates a repressive structure at the core histone gene promoter and contributes to their repression outside of S phase. Involved in regulation of Ty1 transposition. The polypeptide is Histone chaperone RTT106 (Saccharomyces cerevisiae (strain ATCC 204508 / S288c) (Baker's yeast)).